The sequence spans 143 residues: Zinc-containing ferredoxin (143 aa).

Residues 13-60 are N-terminal extension; the sequence is PIDEHFLENDKDYPVTGQHNGHDVRAEGMQRLDADGKPYPTKLGIHGT. Positions 31, 34, and 58 each coordinate Zn(2+). 4Fe-4S ferredoxin-type domains are found at residues 60 to 89 and 115 to 143; these read THVAVDWDCCIADGACMDVCPVNLYEWNLN and KCDPVRESDCIFCMACESVCPVRAIKITP. Residues Cys69 and Cys75 each coordinate [3Fe-4S] cluster. A [4Fe-4S] cluster-binding site is contributed by Cys79. A Zn(2+)-binding site is contributed by Asp117. [4Fe-4S] cluster is bound by residues Cys124, Cys127, and Cys130. Cys134 contributes to the [3Fe-4S] cluster binding site.

Requires [3Fe-4S] cluster as cofactor. [4Fe-4S] cluster serves as cofactor. It depends on Zn(2+) as a cofactor.

Functionally, ferredoxins are iron-sulfur proteins that transfer electrons in a wide variety of metabolic reactions. The sequence is that of Zinc-containing ferredoxin (zfx) from Thermoplasma acidophilum (strain ATCC 25905 / DSM 1728 / JCM 9062 / NBRC 15155 / AMRC-C165).